The sequence spans 280 residues: Energy-coupling factor transporter ATP-binding protein EcfA1 (280 aa).

Residues 6–241 (LRTENISFQY…SHMLQEIGLD (236 aa)) form the ABC transporter domain. 40–47 (GQNGSGKS) contributes to the ATP binding site.

This sequence belongs to the ABC transporter superfamily. Energy-coupling factor EcfA family. As to quaternary structure, forms a stable energy-coupling factor (ECF) transporter complex composed of 2 membrane-embedded substrate-binding proteins (S component), 2 ATP-binding proteins (A component) and 2 transmembrane proteins (T component).

Its subcellular location is the cell membrane. In terms of biological role, ATP-binding (A) component of a common energy-coupling factor (ECF) ABC-transporter complex. Unlike classic ABC transporters this ECF transporter provides the energy necessary to transport a number of different substrates. This is Energy-coupling factor transporter ATP-binding protein EcfA1 from Bacillus cereus (strain ATCC 10987 / NRS 248).